We begin with the raw amino-acid sequence, 434 residues long: GPI-anchor transamidase component PIGU (434 aa).

The Cytoplasmic portion of the chain corresponds to 1 to 3 (MAA). Residues 4–22 (PLALVLVVAVTVRAALFRS) form a helical membrane-spanning segment. Residues 23–78 (SLAEFISERVEVVSPLSSWKRVVEGLALLDLGVSPYSGAVFHETPLIIYLFHFLID) lie on the Lumenal side of the membrane. Residues 79 to 99 (YAELVFMITDALTAIALYFAI) form a helical membrane-spanning segment. Over 100–136 (QDFNKVVFKKQKLLLELDQYAPDVAELIRTPMEMRYI) the chain is Cytoplasmic. The next 4 helical transmembrane spans lie at 137–157 (PLKV…VAKS), 158–177 (TCAI…IKGS), 178–193 (VFLS…YQSL), and 194–204 (YPVTLFAPGLL). Residues 205-221 (YLLQRQYIPVKVKSKAF) lie on the Cytoplasmic side of the membrane. A cardiolipin is bound at residue K215. The helical transmembrane segment at 222 to 243 (WIFSWEYAMMYTGSLVVIVCLS) threads the bilayer. Residues 244-285 (FFLLSSWDFIPAVYGFILSVPDLTPNIGLFWYFFAEMFEHFS) lie on the Lumenal side of the membrane. The chain crosses the membrane as a helical span at residues 286–305 (LFFVCVFQINVFFYTVPLAI). Over 306-310 (KLKEH) the chain is Cytoplasmic. K308 contacts a cardiolipin. 2 consecutive transmembrane segments (helical) span residues 311 to 330 (PIFF…SYPT) and 331 to 344 (VGDV…FPVW). Residues 345-353 (NHLYRFLRN) are Cytoplasmic-facing. The helical transmembrane segment at 354–371 (IFVLTCIIIVCSLLFPVL) threads the bilayer. Over 372-383 (WHLWIYAGSANS) the chain is Lumenal. Residues N382 and N384 each coordinate a 2-acyl-6-[6-phosphoethanolamine-alpha-D-mannosyl-(1-&gt;2)-6-phosphoethanolamine-alpha-D-mannosyl-(1-&gt;6)-2-phosphoethanolamine-alpha-D-mannosyl-(1-&gt;4)-alpha-D-glucosaminyl]-1-(1-radyl,2-acyl-sn-glycero-3-phospho)-1D-myo-inositol. A helical membrane pass occupies residues 384–405 (NFFYAITLTFNVGQILLISDYF). Over 406 to 434 (YAFLRREYYLTHGLYLTAKDGTEAMLVLK) the chain is Cytoplasmic.

It belongs to the PIGU family. In terms of assembly, heteropentamer. Part of the GPI-anchor transamidase complex, consisting of PIGK, PIGT, PIGS, PIGU and GAA1.

Its subcellular location is the endoplasmic reticulum membrane. Its pathway is glycolipid biosynthesis; glycosylphosphatidylinositol-anchor biosynthesis. Its function is as follows. Component of the glycosylphosphatidylinositol-anchor (GPI-anchor) transamidase (GPI-T) complex that catalyzes the formation of the linkage between a proprotein and a GPI-anchor and participates in GPI anchored protein biosynthesis. Binds the lipid portion of GPI-anchor. May act as an organizer in the transmembrane layer to recruit other subunits, and thus is essential for assembly of the complex. In Mus musculus (Mouse), this protein is GPI-anchor transamidase component PIGU.